A 418-amino-acid chain; its full sequence is Serine/threonine transporter SstT (418 aa).

The next 9 membrane-spanning stretches (helical) occupy residues S16–P36, L45–V65, L83–F103, A142–L162, P192–L212, L218–F238, V289–L309, L317–A337, and V364–T384.

This sequence belongs to the dicarboxylate/amino acid:cation symporter (DAACS) (TC 2.A.23) family.

It is found in the cell inner membrane. It carries out the reaction L-serine(in) + Na(+)(in) = L-serine(out) + Na(+)(out). The enzyme catalyses L-threonine(in) + Na(+)(in) = L-threonine(out) + Na(+)(out). Involved in the import of serine and threonine into the cell, with the concomitant import of sodium (symport system). This chain is Serine/threonine transporter SstT, found in Tolumonas auensis (strain DSM 9187 / NBRC 110442 / TA 4).